The chain runs to 564 residues: Putative ABC transporter ATP-binding protein PBPRA2240 (564 aa).

2 consecutive ABC transporter domains span residues 3–244 (IEFS…GIRE) and 299–533 (LTVN…ANLT). ATP-binding positions include 37–44 (GPSGSGKS) and 332–339 (GKNGSGKS).

This sequence belongs to the ABC transporter superfamily.

It is found in the cell inner membrane. Its function is as follows. Probably part of an ABC transporter complex. Responsible for energy coupling to the transport system. The chain is Putative ABC transporter ATP-binding protein PBPRA2240 from Photobacterium profundum (strain SS9).